The chain runs to 266 residues: Undecaprenyl-diphosphatase (266 aa).

7 helical membrane-spanning segments follow: residues 41–61 (NLAF…VVLW), 80–100 (TKYV…GVFF), 107–127 (IFGS…ALLA), 140–160 (ISMK…MPGL), 180–200 (LAQF…LLDV), 213–233 (IPAL…CVAC), and 245–265 (LIYF…CTLL).

Belongs to the UppP family.

Its subcellular location is the cell inner membrane. It carries out the reaction di-trans,octa-cis-undecaprenyl diphosphate + H2O = di-trans,octa-cis-undecaprenyl phosphate + phosphate + H(+). In terms of biological role, catalyzes the dephosphorylation of undecaprenyl diphosphate (UPP). Confers resistance to bacitracin. This chain is Undecaprenyl-diphosphatase, found in Parabacteroides distasonis (strain ATCC 8503 / DSM 20701 / CIP 104284 / JCM 5825 / NCTC 11152).